The following is a 137-amino-acid chain: Cellular retinoic acid-binding protein 1 (137 aa).

The Nuclear localization signal motif lies at 21–31 (KALGVNTMLRK). 132–134 (RIY) provides a ligand contact to all-trans-retinoate.

The protein belongs to the calycin superfamily. Fatty-acid binding protein (FABP) family.

It localises to the cytoplasm. Functionally, cytosolic CRABPs may regulate the access of retinoic acid to the nuclear retinoic acid receptors. The protein is Cellular retinoic acid-binding protein 1 (crabp1) of Takifugu rubripes (Japanese pufferfish).